The following is a 226-amino-acid chain: Orotate phosphoribosyltransferase (226 aa).

5-phospho-alpha-D-ribose 1-diphosphate is bound by residues Arg107, Lys108, Lys111, and 133–141 (EDLTTDGGS). Orotate is bound at residue Thr137.

Belongs to the purine/pyrimidine phosphoribosyltransferase family. PyrE subfamily. In terms of assembly, homodimer. Mg(2+) is required as a cofactor.

The enzyme catalyses orotidine 5'-phosphate + diphosphate = orotate + 5-phospho-alpha-D-ribose 1-diphosphate. It participates in pyrimidine metabolism; UMP biosynthesis via de novo pathway; UMP from orotate: step 1/2. Functionally, catalyzes the transfer of a ribosyl phosphate group from 5-phosphoribose 1-diphosphate to orotate, leading to the formation of orotidine monophosphate (OMP). This chain is Orotate phosphoribosyltransferase, found in Ruegeria sp. (strain TM1040) (Silicibacter sp.).